Reading from the N-terminus, the 683-residue chain is Glucosylceramidase (683 aa).

E254 functions as the Proton donor in the catalytic mechanism. The Nucleophile role is filled by E483.

The protein belongs to the glycosyl hydrolase 5 (cellulase A) family.

The protein localises to the membrane. The enzyme catalyses a beta-D-glucosyl-(1&lt;-&gt;1')-N-acylsphing-4-enine + H2O = an N-acylsphing-4-enine + D-glucose. Inhibited by metal cations Co(2+), Cu(2+), Ni(2+), Pb(2+) and Zn(2+). Not inhibited by metal chelator ethylenediaminetetraacetic acid (EDTA). Specifically hydrolyzes the glucosidic linkage in glucosylceramide. May prevent accumulation of aberrent glucosylceramide containing immature ceramide. This is Glucosylceramidase from Rhizopus delemar (strain RA 99-880 / ATCC MYA-4621 / FGSC 9543 / NRRL 43880) (Mucormycosis agent).